The sequence spans 61 residues: Large ribosomal subunit protein bL28 (61 aa).

The protein belongs to the bacterial ribosomal protein bL28 family.

In Nocardioides sp. (strain ATCC BAA-499 / JS614), this protein is Large ribosomal subunit protein bL28.